Consider the following 105-residue polypeptide: Met repressor (105 aa).

The protein belongs to the MetJ family. Homodimer.

It localises to the cytoplasm. Functionally, this regulatory protein, when combined with SAM (S-adenosylmethionine) represses the expression of the methionine regulon and of enzymes involved in SAM synthesis. In Yersinia pestis bv. Antiqua (strain Antiqua), this protein is Met repressor.